The chain runs to 411 residues: MKAEILAIGTELLMGEIVNTNAQFLAEKLVDLGIYVYHQSVVGDNEERIMQAYELAFSRSDLLIVTGGLGPTKDDMTKEVAAKFFKRELVLHPESLEIMKTFFDARNLPLNEGNIKQAYFPIGAKILPNPNGTAPGCMVEEGGKTFILLPGPPREMIPMYENHVVPHLKPYQKNVLVSKVLHIVGIGEGHMVEKIEDIIDGQNNPTVAPYAKAKGLTLRITASGQNQSIAEGLIKPVQEAIQERLGEDVYGEGDITLEEVVAKKLIEKKQTIAIAESCTGGMLSGRLTNYPGISSVFMEAMITYSNEAKIKRLDVSPQTIENYGAVSEETAKEMAIGMARTANADIGLSVTGIAGPGGGTVDKPVGLVYIGLYLNGQMQAKKLIVSGDRQRVRKLTTTYALDFLRRQLMKV.

Belongs to the CinA family.

This Alkaliphilus metalliredigens (strain QYMF) protein is Putative competence-damage inducible protein.